A 160-amino-acid chain; its full sequence is MDLAIIDQTHDGVSRYHHDLVESVLNFAGEALKLPVNTEMSVTFVNNDEIQRYNRDYRGVDKPTDVISFAIEEGEDDFNIISDDAWTEDIAKNIGDIIVSVDIIGAQAEYLGHSYERELGFLVVHGFLHLNGYDHMLGDAEEKEMFDLQREILDNYGLKR.

Zn(2+) is bound by residues His-125, His-129, and His-135.

It belongs to the endoribonuclease YbeY family. Zn(2+) is required as a cofactor.

It is found in the cytoplasm. Its function is as follows. Single strand-specific metallo-endoribonuclease involved in late-stage 70S ribosome quality control and in maturation of the 3' terminus of the 16S rRNA. The protein is Endoribonuclease YbeY of Leuconostoc citreum (strain KM20).